The following is a 204-amino-acid chain: Inactive ribonuclease-like protein 9 (204 aa).

Residues 1–26 form the signal peptide; that stretch reads MMRTLITIHPLPLLLLLQQLLQPVQF. 3 disulfides stabilise this stretch: Cys97-Cys152, Cys115-Cys167, and Cys122-Cys129. Residues Asn130 and Asn142 are each glycosylated (N-linked (GlcNAc...) asparagine).

This sequence belongs to the pancreatic ribonuclease family.

Its subcellular location is the secreted. Its function is as follows. Does not exhibit any ribonuclease activity. This Pongo pygmaeus (Bornean orangutan) protein is Inactive ribonuclease-like protein 9 (RNASE9).